A 99-amino-acid chain; its full sequence is uncharacterized protein (99 aa).

Residues 1–19 (MLGMIRWVVEGTLVAMLLS) form the signal peptide. The tract at residues 71 to 99 (DGFGRINDSGPKRRGRDQSQYSSRFVELD) is disordered.

It localises to the cytoplasm. This is an uncharacterized protein from Saccharomyces cerevisiae (strain ATCC 204508 / S288c) (Baker's yeast).